The following is a 218-amino-acid chain: Protein-methionine-sulfoxide reductase heme-binding subunit MsrQ (218 aa).

Transmembrane regions (helical) follow at residues 14 to 34 (AVHAAVLAPIALLGWQFWQVW), 60 to 80 (LLLITLAITPLRQLTGQAVLI), 86 to 106 (LGLYAFFYASVHLTAYLWLDL), 121 to 141 (PYITVGFTAWLLLVPLAITST), and 155 to 175 (LHMLIYPIGLLAVLHFWWLVK).

The protein belongs to the MsrQ family. Heterodimer of a catalytic subunit (MsrP) and a heme-binding subunit (MsrQ). FMN is required as a cofactor. Requires heme b as cofactor.

The protein localises to the cell inner membrane. Part of the MsrPQ system that repairs oxidized periplasmic proteins containing methionine sulfoxide residues (Met-O), using respiratory chain electrons. Thus protects these proteins from oxidative-stress damage caused by reactive species of oxygen and chlorine generated by the host defense mechanisms. MsrPQ is essential for the maintenance of envelope integrity under bleach stress, rescuing a wide series of structurally unrelated periplasmic proteins from methionine oxidation. MsrQ provides electrons for reduction to the reductase catalytic subunit MsrP, using the quinone pool of the respiratory chain. In Xanthomonas campestris pv. campestris (strain 8004), this protein is Protein-methionine-sulfoxide reductase heme-binding subunit MsrQ.